A 458-amino-acid polypeptide reads, in one-letter code: tRNA modification GTPase MnmE (458 aa).

Residues R23, E80, and K122 each contribute to the (6S)-5-formyl-5,6,7,8-tetrahydrofolate site. A TrmE-type G domain is found at 218–380; it reads GMKIVIAGRP…LREHLQQTMG (163 aa). N228 contributes to the K(+) binding site. GTP contacts are provided by residues 228–233, 247–253, 272–275, and 361–363; these read NVGKSS, TQIPGTT, DTAG, and SAR. Residue S232 participates in Mg(2+) binding. K(+)-binding residues include T247, I249, and T252. Residue T253 coordinates Mg(2+). K458 contributes to the (6S)-5-formyl-5,6,7,8-tetrahydrofolate binding site.

It belongs to the TRAFAC class TrmE-Era-EngA-EngB-Septin-like GTPase superfamily. TrmE GTPase family. Homodimer. Heterotetramer of two MnmE and two MnmG subunits. It depends on K(+) as a cofactor.

Its subcellular location is the cytoplasm. Exhibits a very high intrinsic GTPase hydrolysis rate. Involved in the addition of a carboxymethylaminomethyl (cmnm) group at the wobble position (U34) of certain tRNAs, forming tRNA-cmnm(5)s(2)U34. The chain is tRNA modification GTPase MnmE from Hamiltonella defensa subsp. Acyrthosiphon pisum (strain 5AT).